Reading from the N-terminus, the 257-residue chain is uncharacterized protein (257 aa).

Residues isoleucine 7–tyrosine 27 traverse the membrane as a helical segment.

The protein localises to the membrane. This is an uncharacterized protein from Methanocaldococcus jannaschii (strain ATCC 43067 / DSM 2661 / JAL-1 / JCM 10045 / NBRC 100440) (Methanococcus jannaschii).